Reading from the N-terminus, the 232-residue chain is Ubiquinone biosynthesis O-methyltransferase (232 aa).

4 residues coordinate S-adenosyl-L-methionine: R36, G55, D76, and M120.

It belongs to the methyltransferase superfamily. UbiG/COQ3 family.

It catalyses the reaction a 3-demethylubiquinol + S-adenosyl-L-methionine = a ubiquinol + S-adenosyl-L-homocysteine + H(+). The catalysed reaction is a 3-(all-trans-polyprenyl)benzene-1,2-diol + S-adenosyl-L-methionine = a 2-methoxy-6-(all-trans-polyprenyl)phenol + S-adenosyl-L-homocysteine + H(+). Its pathway is cofactor biosynthesis; ubiquinone biosynthesis. In terms of biological role, O-methyltransferase that catalyzes the 2 O-methylation steps in the ubiquinone biosynthetic pathway. In Burkholderia vietnamiensis (strain G4 / LMG 22486) (Burkholderia cepacia (strain R1808)), this protein is Ubiquinone biosynthesis O-methyltransferase.